A 524-amino-acid polypeptide reads, in one-letter code: Thioredoxin reductase 2, mitochondrial (524 aa).

The N-terminal 36 residues, M1–G36, are a transit peptide targeting the mitochondrion. Residue D41–Y70 coordinates FAD. C86 and C91 are oxidised to a cystine. K175 and K329 each carry N6-succinyllysine. H497 functions as the Proton acceptor in the catalytic mechanism. A cross-link (cysteinyl-selenocysteine (Cys-Sec)) is located at residues C522–U523. Position 523 (U523) is a non-standard amino acid, selenocysteine.

Belongs to the class-I pyridine nucleotide-disulfide oxidoreductase family. As to quaternary structure, homodimer. Requires FAD as cofactor. As to expression, highly expressed in the prostate, ovary, liver, testis, uterus, colon and small intestine. Intermediate levels in brain, skeletal muscle, heart and spleen. Low levels in placenta, pancreas, thymus and peripheral blood leukocytes. According to PubMed:10608886, high levels in kidney, whereas according to PubMed:9923614, levels are low. High expression is observed in the adrenal cortex.

It is found in the mitochondrion. It catalyses the reaction [thioredoxin]-dithiol + NADP(+) = [thioredoxin]-disulfide + NADPH + H(+). Functionally, involved in the control of reactive oxygen species levels and the regulation of mitochondrial redox homeostasis. Maintains thioredoxin in a reduced state. May play a role in redox-regulated cell signaling. The sequence is that of Thioredoxin reductase 2, mitochondrial from Homo sapiens (Human).